We begin with the raw amino-acid sequence, 506 residues long: Maturase K (506 aa).

This sequence belongs to the intron maturase 2 family. MatK subfamily.

Its subcellular location is the plastid. It is found in the chloroplast. Usually encoded in the trnK tRNA gene intron. Probably assists in splicing its own and other chloroplast group II introns. The chain is Maturase K from Uncarina grandidieri (Mouse trap tree).